The primary structure comprises 483 residues: UDP-N-acetylmuramoyl-L-alanyl-D-glutamate--2,6-diaminopimelate ligase (483 aa).

Serine 30 contributes to the UDP-N-acetyl-alpha-D-muramoyl-L-alanyl-D-glutamate binding site. ATP is bound at residue 109 to 115 (GTNGKTT). UDP-N-acetyl-alpha-D-muramoyl-L-alanyl-D-glutamate-binding positions include 151-152 (TT), serine 178, and arginine 186. Lysine 218 carries the N6-carboxylysine modification. Meso-2,6-diaminopimelate is bound by residues arginine 380, 403-406 (DNPR), glycine 453, and glutamate 457. The short motif at 403 to 406 (DNPR) is the Meso-diaminopimelate recognition motif element.

Belongs to the MurCDEF family. MurE subfamily. Mg(2+) serves as cofactor. Post-translationally, carboxylation is probably crucial for Mg(2+) binding and, consequently, for the gamma-phosphate positioning of ATP.

The protein resides in the cytoplasm. The catalysed reaction is UDP-N-acetyl-alpha-D-muramoyl-L-alanyl-D-glutamate + meso-2,6-diaminopimelate + ATP = UDP-N-acetyl-alpha-D-muramoyl-L-alanyl-gamma-D-glutamyl-meso-2,6-diaminopimelate + ADP + phosphate + H(+). The protein operates within cell wall biogenesis; peptidoglycan biosynthesis. Its function is as follows. Catalyzes the addition of meso-diaminopimelic acid to the nucleotide precursor UDP-N-acetylmuramoyl-L-alanyl-D-glutamate (UMAG) in the biosynthesis of bacterial cell-wall peptidoglycan. The chain is UDP-N-acetylmuramoyl-L-alanyl-D-glutamate--2,6-diaminopimelate ligase from Chlamydia abortus (strain DSM 27085 / S26/3) (Chlamydophila abortus).